Reading from the N-terminus, the 550-residue chain is MTKYVFVTGGVVSSLGKGIAAASLAAILESRGLQVTLLKLDPYINVDPGTMSPFQHGEVFVTEDGAETDLDLGHYERFISARMRKVNNFTTGQIYESVLRKERRGDYLGKTVQVIPHITNEIQDFVARGAEAAWNGATDVAIVEIGGTVGDIESLPFLEAARQMSLRMGRNNAAFVHLTLVPYIASAGELKTKPTQHSVQKLREIGIYPNVLLCRADRRIPDDERAKISMFSNVPLDAVISVWDVDSIYKIPAMLHKQGVDNIVCEALGLTPPPADLSMWDNLVDALEHPQDSVTIGMVGKYVDLTESYKSLSEALVHAGIHTRSKVNIEYIDSEDIETRGTDQLKHLDAILVPGGFGKRGTEGKIAAIRYARENGVPYLGICLGMQLAVIEFARHVAGLGGANSTEFDPAAPHPVVALITEWMDREGRVERRDNSSDLGGTMRKGAQRCPIRPGTRAQSIYGDDVNERHRHRYEVNNVYVPRLEDAGMVISARTPTENLPEMMELPSHPWFVGVQFHPEFTSTPRDGHPLFSSYIRAALEHKAQRAKEA.

An amidoligase domain region spans residues 1 to 270 (MTKYVFVTGG…DNIVCEALGL (270 aa)). A CTP-binding site is contributed by S13. Position 13 (S13) interacts with UTP. Residues 14–19 (SLGKGI) and D71 each bind ATP. D71 and E144 together coordinate Mg(2+). CTP-binding positions include 151–153 (DIE), 191–196 (KTKPTQ), and K227. Residues 191-196 (KTKPTQ) and K227 each bind UTP. Residues 295-545 (TIGMVGKYVD…IRAALEHKAQ (251 aa)) enclose the Glutamine amidotransferase type-1 domain. An L-glutamine-binding site is contributed by G356. The Nucleophile; for glutamine hydrolysis role is filled by C383. Residues 384 to 387 (LGMQ) and E407 each bind L-glutamine. A disordered region spans residues 430 to 459 (VERRDNSSDLGGTMRKGAQRCPIRPGTRAQ). L-glutamine is bound at residue R473. Catalysis depends on residues H518 and E520.

The protein belongs to the CTP synthase family. As to quaternary structure, homotetramer.

It carries out the reaction UTP + L-glutamine + ATP + H2O = CTP + L-glutamate + ADP + phosphate + 2 H(+). It catalyses the reaction L-glutamine + H2O = L-glutamate + NH4(+). The enzyme catalyses UTP + NH4(+) + ATP = CTP + ADP + phosphate + 2 H(+). Its pathway is pyrimidine metabolism; CTP biosynthesis via de novo pathway; CTP from UDP: step 2/2. Its activity is regulated as follows. Allosterically activated by GTP, when glutamine is the substrate; GTP has no effect on the reaction when ammonia is the substrate. The allosteric effector GTP functions by stabilizing the protein conformation that binds the tetrahedral intermediate(s) formed during glutamine hydrolysis. Inhibited by the product CTP, via allosteric rather than competitive inhibition. Functionally, catalyzes the ATP-dependent amination of UTP to CTP with either L-glutamine or ammonia as the source of nitrogen. Regulates intracellular CTP levels through interactions with the four ribonucleotide triphosphates. The protein is CTP synthase of Bordetella parapertussis (strain 12822 / ATCC BAA-587 / NCTC 13253).